The primary structure comprises 419 residues: 3-oxo-isoapionate-4-phosphate decarboxylase (419 aa).

Residues Lys-179, Asp-181, and Glu-182 each coordinate Mg(2+). Lys-179 is subject to N6-carboxylysine.

Belongs to the RuBisCO large chain family. It depends on Mg(2+) as a cofactor.

It carries out the reaction 3-oxoisoapionate 4-phosphate + H(+) = L-erythrulose 1-phosphate + CO2. It functions in the pathway carbohydrate metabolism. Involved in catabolism of D-apiose. Catalyzes the decarboxylation of 3-oxo-isoapionate 4-phosphate to L-erythrulose 1-phosphate. The polypeptide is 3-oxo-isoapionate-4-phosphate decarboxylase (Rhizobium rhizogenes (strain K84 / ATCC BAA-868) (Agrobacterium radiobacter)).